The primary structure comprises 344 residues: Cinnamoyl-CoA reductase 1 (344 aa).

S7 is subject to Phosphoserine. NADP(+) contacts are provided by residues 17-23 (GAGGYIA), R42, K48, 68-69 (DL), 88-90 (TAS), Y161, K165, 188-191 (PVLV), and S203. C154 and C162 are oxidised to a cystine. K165 (proton donor) is an active-site residue. A disordered region spans residues 317-344 (QEKGHLAPPPPPPSASQESVENGIKIGS).

The protein belongs to the NAD(P)-dependent epimerase/dehydratase family. Dihydroflavonol-4-reductase subfamily. Expressed in leaves, stems and flowers.

It catalyses the reaction (E)-cinnamaldehyde + NADP(+) + CoA = (E)-cinnamoyl-CoA + NADPH + H(+). The protein operates within aromatic compound metabolism; phenylpropanoid biosynthesis. Involved in the latter stages of lignin biosynthesis. Catalyzes one of the last steps of monolignol biosynthesis, the conversion of cinnamoyl-CoAs into their corresponding cinnamaldehydes. The chain is Cinnamoyl-CoA reductase 1 from Arabidopsis thaliana (Mouse-ear cress).